Reading from the N-terminus, the 427-residue chain is Glutamyl-tRNA reductase (427 aa).

Substrate-binding positions include 49–52 (TCNR), serine 101, 106–108 (EPQ), and glutamine 112. The Nucleophile role is filled by cysteine 50. NADP(+) is bound at residue 181–186 (GAGETI). The segment at 407 to 427 (FPATPGYRHPPVRPDDADPAP) is disordered. Basic and acidic residues predominate over residues 418–427 (VRPDDADPAP).

This sequence belongs to the glutamyl-tRNA reductase family. In terms of assembly, homodimer.

The enzyme catalyses (S)-4-amino-5-oxopentanoate + tRNA(Glu) + NADP(+) = L-glutamyl-tRNA(Glu) + NADPH + H(+). The protein operates within porphyrin-containing compound metabolism; protoporphyrin-IX biosynthesis; 5-aminolevulinate from L-glutamyl-tRNA(Glu): step 1/2. Its function is as follows. Catalyzes the NADPH-dependent reduction of glutamyl-tRNA(Glu) to glutamate 1-semialdehyde (GSA). The protein is Glutamyl-tRNA reductase of Stenotrophomonas maltophilia (strain R551-3).